The chain runs to 330 residues: Complement factor H-related protein 3 (330 aa).

An N-terminal signal peptide occupies residues 1 to 18 (MLLLINVILTLWVSCANG). 5 Sushi domains span residues 22–84 (PCDF…VPCL), 85–142 (RKCY…RCIR), 144–205 (RTCS…ICIN), 208–266 (EKCG…RCIH), and 267–330 (PCII…PRCE). Disulfide bonds link Cys23/Cys72, Cys55/Cys83, Cys87/Cys129, Cys114/Cys140, Cys146/Cys192, and Cys175/Cys203. Asn108 is a glycosylation site (N-linked (GlcNAc...) asparagine). Residues Asn185 and Asn205 are each glycosylated (N-linked (GlcNAc...) asparagine). Disulfide bonds link Cys210-Cys253, Cys239-Cys264, Cys268-Cys319, and Cys302-Cys329. An N-linked (GlcNAc...) asparagine glycan is attached at Asn309.

Expressed by the liver and secreted in plasma.

It localises to the secreted. Its function is as follows. Might be involved in complement regulation. This Homo sapiens (Human) protein is Complement factor H-related protein 3 (CFHR3).